A 338-amino-acid chain; its full sequence is Phytanoyl-CoA dioxygenase, peroxisomal (338 aa).

The N-terminal 30 residues, 1-30 (MDYTRAGARLQVLLGHLGRPSALQIVAHPV), are a transit peptide targeting the peroxisome. 2 positions are modified to N6-succinyllysine: K59 and K108. Residues K120, M157, 175 to 177 (HQD), and W193 contribute to the 2-oxoglutarate site. Fe cation-binding residues include H175 and D177. K231 and K252 each carry N6-succinyllysine. H264 is a Fe cation binding site. 2-oxoglutarate is bound by residues S266 and R275.

The protein belongs to the PhyH family. As to quaternary structure, interacts specifically with FKBP52 and PHYHIP. It depends on Fe cation as a cofactor. The cofactor is L-ascorbate. ATP serves as cofactor. Requires Mg(2+) as cofactor.

It is found in the peroxisome. It catalyses the reaction phytanoyl-CoA + 2-oxoglutarate + O2 = 2-hydroxyphytanoyl-CoA + succinate + CO2. It carries out the reaction 3-methylhexadecanoyl-CoA + 2-oxoglutarate + O2 = 2-hydroxy-3-methylhexadecanoyl-CoA + succinate + CO2. The enzyme catalyses hexadecanoyl-CoA + 2-oxoglutarate + O2 = 2-hydroxyhexadecanoyl-CoA + succinate + CO2. The catalysed reaction is octanoyl-CoA + 2-oxoglutarate + O2 = 2-hydroxyoctanoyl-CoA + succinate + CO2. It catalyses the reaction decanoyl-CoA + 2-oxoglutarate + O2 = 2-hydroxydecanoyl-CoA + succinate + CO2. It carries out the reaction 3-methylbutanoyl-CoA + 2-oxoglutarate + O2 = 2-hydroxy-3-methylbutanoyl-CoA + succinate + CO2. The enzyme catalyses heptadecanoyl-CoA + 2-oxoglutarate + O2 = 2-hydroxyheptadecanoyl-CoA + succinate + CO2. The catalysed reaction is eicosanoyl-CoA + 2-oxoglutarate + O2 = 2-hydroxyeicosanoyl-CoA + succinate + CO2. It catalyses the reaction octadecanoyl-CoA + 2-oxoglutarate + O2 = 2-hydroxyoctadecanoyl-CoA + succinate + CO2. It carries out the reaction dodecanoyl-CoA + 2-oxoglutarate + O2 = 2-hydroxydodecanoyl-CoA + succinate + CO2. The enzyme catalyses tetradecanoyl-CoA + 2-oxoglutarate + O2 = 2-hydroxytetradecanoyl-CoA + succinate + CO2. The catalysed reaction is hexanoyl-CoA + 2-oxoglutarate + O2 = 2-hydroxyhexanoyl-CoA + succinate + CO2. It catalyses the reaction butanoyl-CoA + 2-oxoglutarate + O2 = 2-hydroxybutanoyl-CoA + succinate + CO2. It carries out the reaction 3-methylnonanoyl-CoA + 2-oxoglutarate + O2 = 2-hydroxy-3-methylnonanoyl-CoA + succinate + CO2. The enzyme catalyses 3-methylundecanoyl-CoA + 2-oxoglutarate + O2 = 2-hydroxy-3-methylundecanoyl-CoA + succinate + CO2. The catalysed reaction is 3-methyldodecanoyl-CoA + 2-oxoglutarate + O2 = 2-hydroxy-3-methyldodecanoyl-CoA + succinate + CO2. It functions in the pathway lipid metabolism; fatty acid metabolism. In terms of biological role, catalyzes the 2-hydroxylation of racemic phytanoyl-CoA and the isomers of 3-methylhexadecanoyl-CoA. Shows activity also towards a variety of other mono-branched 3-methylacyl-CoA esters (with a chain length of at least seven carbon atoms) and straight-chain acyl-CoA esters (with a chain length longer than four carbon atoms). Does not hydroxylate long and very long straight chain acyl-CoAs or 2-methyl-and 4-methyl-branched acyl-CoAs. The chain is Phytanoyl-CoA dioxygenase, peroxisomal (Phyh) from Rattus norvegicus (Rat).